We begin with the raw amino-acid sequence, 455 residues long: Cysteine--tRNA ligase (455 aa).

C28 contributes to the Zn(2+) binding site. The 'HIGH' region signature appears at 30 to 40 (MTVYDYCHLGH). Zn(2+) is bound by residues C209, H234, and E238. The 'KMSKS' region motif lies at 266–270 (KMSKS). ATP is bound at residue K269.

It belongs to the class-I aminoacyl-tRNA synthetase family. Monomer. Requires Zn(2+) as cofactor.

The protein resides in the cytoplasm. It carries out the reaction tRNA(Cys) + L-cysteine + ATP = L-cysteinyl-tRNA(Cys) + AMP + diphosphate. This chain is Cysteine--tRNA ligase, found in Methylobacillus flagellatus (strain ATCC 51484 / DSM 6875 / VKM B-1610 / KT).